Reading from the N-terminus, the 160-residue chain is uncharacterized protein (160 aa).

The signal sequence occupies residues 1 to 29 (MTGKTHIMGGIASCTAAAYYYGFDPVLMA). The next 2 helical transmembrane spans lie at 67–87 (TFTH…TYIP) and 137–157 (QLVL…LFHG).

To E.coli YdjM.

The protein resides in the cell membrane. This is an uncharacterized protein from Bacillus subtilis (strain 168).